Consider the following 1943-residue polypeptide: Protocadherin-15 (1943 aa).

The N-terminal stretch at 1–26 is a signal peptide; that stretch reads MFLQFAVWKCLPHGILIASLLVVSWG. The Extracellular portion of the chain corresponds to 27–1381; the sequence is QYDDDWQYED…GESLGYTEGA (1355 aa). Cys37 and Cys125 are oxidised to a cystine. Cadherin domains lie at 45–152, 153–270, 283–400, 401–514, 515–621, 622–722, 724–824, 825–931, 932–1040, 1042–1149, and 1150–1264; these read PATI…SPTF, KHES…GPMF, RPLT…SPYF, TMPS…TPTF, PEIS…PPRF, PQLM…APVF, PYLP…SPVF, TNST…PPVF, SKRI…IPRF, QEEY…PPVF, and QKKF…PPTL. 3 N-linked (GlcNAc...) asparagine glycosylation sites follow: Asn57, Asn102, and Asn206. N-linked (GlcNAc...) asparagine glycans are attached at residues Asn424, Asn564, Asn667, Asn729, Asn773, Asn826, and Asn856. Asn1069, Asn1089, and Asn1180 each carry an N-linked (GlcNAc...) asparagine glycan. A helical transmembrane segment spans residues 1382–1402; sequence LLALAFIIILCCIPAILVVLV. Over 1403-1943 the chain is Cytoplasmic; that stretch reads SYRQFKVRQA…VQPHSQSTSL (541 aa). Disordered regions lie at residues 1425 to 1453, 1475 to 1533, and 1714 to 1865; these read PAAKPAAPVPAAPAPPPPPPPPPPGAHLY, GNNS…STHN, and ILNS…EPHR. The span at 1431–1449 shows a compositional bias: pro residues; it reads APVPAAPAPPPPPPPPPPG. Composition is skewed to basic and acidic residues over residues 1480–1489 and 1498–1509; these read PEDRSSHRDG and ESHEPAHVEGPL. Composition is skewed to pro residues over residues 1742 to 1760 and 1769 to 1779; these read PHPPSISAPLPHPPLPRPP and PLSPPNPPPPQ. The segment covering 1784-1795 has biased composition (low complexity); the sequence is SLPISTPPTSSL. Pro residues predominate over residues 1796–1821; the sequence is PLPPPLSLPPPPRPPAPRLFPQPPST. Residues 1822–1834 are compositionally biased toward low complexity; it reads SIPSTDSISAPAA. The segment covering 1846-1858 has biased composition (polar residues); it reads TTSTTQPPASNPQ.

As to quaternary structure, antiparallel heterodimer with CDH23. Found in a complex with TMIE and LHFPL5. Interacts with LHFPL5/TMHS; this interaction is required for efficient localization to hair bundles. Interacts with MYO7A. Interacts with USH1G; this interaction may recruit USH1G to the plasma membrane. Interacts with TOMT. Isoforms CD1 and CD3 interact with TMC1 (via N-terminus) and TMC2 (via N-terminus). Interacts with PIEZO1. In terms of tissue distribution, expressed in brain and sensory epithelium of the developing inner ear. Expressed in the retina, in the photoreceptor inner segments, the outer plexiform layer, the inner nuclei layer and the ganglion cell layer and, more diffusely in the inner plexiform layer (at protein level). Not detected in the retinal pigment epithelium (at protein level). Expressed in the spleen, dorsal root ganglion, dorsal aspect of neural tube, floor plate and ependymal cells adjacent to the neural canal.

The protein resides in the cell membrane. The protein localises to the secreted. Functionally, calcium-dependent cell-adhesion protein. Required for inner ear neuroepithelial cell elaboration and cochlear function. Probably involved in the maintenance of normal retinal function. The chain is Protocadherin-15 (Pcdh15) from Mus musculus (Mouse).